The following is a 108-amino-acid chain: Biogenesis of lysosome-related organelles complex 1 subunit CNL1 (108 aa).

The protein belongs to the BLOC1S4 family. As to quaternary structure, component of the biogenesis of lysosome-related organelles complex-1 (BLOC-1).

The protein resides in the cytoplasm. In terms of biological role, component of the biogenesis of lysosome-related organelles complex-1 (BLOC-1), a complex that is involved in endosomal cargo sorting. In Zygosaccharomyces rouxii (strain ATCC 2623 / CBS 732 / NBRC 1130 / NCYC 568 / NRRL Y-229), this protein is Biogenesis of lysosome-related organelles complex 1 subunit CNL1 (CLN1).